A 128-amino-acid polypeptide reads, in one-letter code: Probable 4-amino-4-deoxy-L-arabinose-phosphoundecaprenol flippase subunit ArnF (128 aa).

Topologically, residues 1–2 are cytoplasmic; the sequence is MG. The chain crosses the membrane as a helical span at residues 3–23; it reads LMWGLFSVIIASAAQLSLGFA. Topologically, residues 24–32 are periplasmic; it reads ASHLPPMTH. The chain crosses the membrane as a helical span at residues 33–53; it reads LWDFIAALLAFGLDARILLLG. The Cytoplasmic segment spans residues 54–76; it reads LQGYLLSVFCWYKTLHKLALSKA. Residues 77-97 form a helical membrane-spanning segment; that stretch reads YALLSMSYVLVWIASMVLPGW. Over 98-100 the chain is Periplasmic; that stretch reads EGT. Residues 101 to 121 form a helical membrane-spanning segment; the sequence is FSLKALLGVACIMSGLMLIFL. Residues 122–128 are Cytoplasmic-facing; it reads PTTKQRY.

It belongs to the ArnF family. In terms of assembly, heterodimer of ArnE and ArnF.

The protein resides in the cell inner membrane. It participates in bacterial outer membrane biogenesis; lipopolysaccharide biosynthesis. Functionally, translocates 4-amino-4-deoxy-L-arabinose-phosphoundecaprenol (alpha-L-Ara4N-phosphoundecaprenol) from the cytoplasmic to the periplasmic side of the inner membrane. The polypeptide is Probable 4-amino-4-deoxy-L-arabinose-phosphoundecaprenol flippase subunit ArnF (Escherichia coli O7:K1 (strain IAI39 / ExPEC)).